Here is a 157-residue protein sequence, read N- to C-terminus: Arginine regulator (157 aa).

This sequence belongs to the ArgR family.

The protein resides in the cytoplasm. It functions in the pathway amino-acid degradation; L-arginine degradation via ADI pathway. Functionally, regulates the transcription of the arc operon, involved in arginine catabolism. The sequence is that of Arginine regulator (argR1) from Streptococcus pyogenes serotype M3 (strain ATCC BAA-595 / MGAS315).